A 305-amino-acid chain; its full sequence is E3 ubiquitin-protein ligase RNF115 (305 aa).

Ala2 is modified (N-acetylalanine). Positions 100–110 are enriched in basic and acidic residues; that stretch reads NRANERGHQTH. Residues 100–139 form a disordered region; that stretch reads NRANERGHQTHTDFWGPSRPPRLPMTRRYRSRGSTRPDRS. Ser133 carries the post-translational modification Phosphoserine. An RING-type zinc finger spans residues 229-270; that stretch reads CPVCKEDYTVEEKVRQLPCNHFFHSSCIVPWLELHDTCPVCR. Positions 274–305 are disordered; that stretch reads NGEDSTRQTQSSEASASNRFSNDSQLHDRWTF. Polar residues predominate over residues 280–297; it reads RQTQSSEASASNRFSNDS.

In terms of assembly, interacts with RAB7A. Interacts with EGFR and FLT3. Interacts with BST2. Interacts with STX17. Interacts with YWHAE. Phosphorylated by AKT1, allowing association with the 14-3-3 chaperones that facilitates associating with TLRs. In terms of processing, deubiquitinated by USP9X; antogonizing its autoubiquitination and subsequent proteasomal degradation. Post-translationally, RING-type zinc finger-dependent and E2-dependent autoubiquitination.

The protein resides in the cytoplasm. It is found in the cytoplasmic vesicle. It localises to the phagosome. Its subcellular location is the nucleus. The protein localises to the endoplasmic reticulum. The protein resides in the golgi apparatus. The enzyme catalyses S-ubiquitinyl-[E2 ubiquitin-conjugating enzyme]-L-cysteine + [acceptor protein]-L-lysine = [E2 ubiquitin-conjugating enzyme]-L-cysteine + N(6)-ubiquitinyl-[acceptor protein]-L-lysine.. Its pathway is protein modification; protein ubiquitination. In terms of biological role, E3 ubiquitin-protein ligase that catalyzes the 'Lys-48'- and/or 'Lys-63'-linked polyubiquitination of various substrates and thereby plays a role in a number of signaling pathways including autophagy, innate immunity, cell proliferation and cell death. Plays a role in the endosomal trafficking and degradation of membrane receptors including EGFR, FLT3, MET and CXCR4 through their polyubiquitination. Participates together with BST2 in antiviral immunity by facilitating the internalization of HIV-1 virions into intracellular vesicles leading to their lysosomal degradation. Also possesses an antiviral activity independently of BST2 by promoting retroviral GAG proteins ubiquitination, redistribution to endo-lysosomal compartments and, ultimately, lysosomal degradation. Catalyzes distinct types of ubiquitination on MAVS and STING1 at different phases of viral infection to promote innate antiviral response. Mediates the 'Lys-48'-linked ubiquitination of MAVS leading to its proteasomal degradation and ubiquitinates STING1 via 'Lys-63'-linked polyubiquitination, critical for its oligomerization and the subsequent recruitment of TBK1. Plays a positive role in the autophagosome-lysosome fusion by interacting with STX17 and enhancing its stability without affecting 'Lys-48'- or 'Lys-63'-linked polyubiquitination levels, which in turn promotes autophagosome maturation. Negatively regulates TLR-induced expression of proinflammatory cytokines by catalyzing 'Lys-11'-linked ubiquitination of RAB1A and RAB13 to inhibit post-ER trafficking of TLRs to the Golgi by RAB1A and subsequently from the Golgi apparatus to the cell surface by RAB13. The protein is E3 ubiquitin-protein ligase RNF115 of Mus musculus (Mouse).